A 300-amino-acid polypeptide reads, in one-letter code: Protein SPEAR4 (300 aa).

The span at 1-10 (MCSKTSSVSY) shows a compositional bias: polar residues. Residues 1 to 45 (MCSKTSSVSYGNREDDDNYSSLCPKKQKHNNGGKKRVPRRGPGVA) form a disordered region. Residues 25-39 (KKQKHNNGGKKRVPR) are compositionally biased toward basic residues. An SPL motif is present at residues 40 to 48 (RGPGVAELE). The short motif at 294–300 (IDLRLKL) is the EAR element.

In terms of assembly, interacts with SPL and SPEAR2. In terms of tissue distribution, expressed in leaves.

Its function is as follows. Adapter-like transcriptional repressor recruiting TPL/TPR coepressors to inhibit TCP transcription factors. May be involved in leaf development. In Arabidopsis thaliana (Mouse-ear cress), this protein is Protein SPEAR4.